Here is an 82-residue protein sequence, read N- to C-terminus: Small ribosomal subunit protein bS18 (82 aa).

The interval 1-20 (MVDINQIPTRRPFHRRRKTC) is disordered.

This sequence belongs to the bacterial ribosomal protein bS18 family. Part of the 30S ribosomal subunit. Forms a tight heterodimer with protein bS6.

Functionally, binds as a heterodimer with protein bS6 to the central domain of the 16S rRNA, where it helps stabilize the platform of the 30S subunit. The polypeptide is Small ribosomal subunit protein bS18 (Brucella abortus (strain 2308)).